A 265-amino-acid polypeptide reads, in one-letter code: Polyprenol monophosphomannose synthase (265 aa).

Basic and acidic residues predominate over residues 1-10 (MSVPGEREQG). A disordered region spans residues 1 to 21 (MSVPGEREQGAGEDPATVRPT).

It belongs to the glycosyltransferase 2 family. In terms of assembly, interacts with Lnt (also called Ppm2, AC A0QZ13) upon coexpression in E.coli, which increases the PPM synthase activity of this protein.

It is found in the cytoplasm. The catalysed reaction is a di-trans,poly-cis-dolichyl phosphate + GDP-alpha-D-mannose = a di-trans,poly-cis-dolichyl beta-D-mannosyl phosphate + GDP. Functionally, transfers mannose from GDP-mannose to lipid acceptors to form polyprenol monophosphomannose (PPM); catalytic activity in vitro is enhanced by Lnt (AC A0QZ13). PMM is an alkai-stable sugar donor which adds mannose-phosphate residues to triacylated-PIM2, eventually leading to generation of the cell wall glycolipid lipoglycan modulins lipoarabinomannan (LAM) and lipomannan (LM). This Mycolicibacterium smegmatis (strain ATCC 700084 / mc(2)155) (Mycobacterium smegmatis) protein is Polyprenol monophosphomannose synthase.